The following is a 388-amino-acid chain: Ferrochelatase (388 aa).

Fe cation contacts are provided by H196 and E277.

Belongs to the ferrochelatase family.

Its subcellular location is the cytoplasm. It catalyses the reaction heme b + 2 H(+) = protoporphyrin IX + Fe(2+). The protein operates within porphyrin-containing compound metabolism; protoheme biosynthesis; protoheme from protoporphyrin-IX: step 1/1. In terms of biological role, catalyzes the ferrous insertion into protoporphyrin IX. In Nostoc punctiforme (strain ATCC 29133 / PCC 73102), this protein is Ferrochelatase.